The following is a 584-amino-acid chain: ATP synthase subunit alpha, mitochondrial (584 aa).

A mitochondrion-targeting transit peptide spans 1–24 (MRRFGSKFASGLASRCALACPLAS). Residues 207–214 (DRQTGKTS) and Gln464 contribute to the ATP site.

The protein belongs to the ATPase alpha/beta chains family. As to quaternary structure, F-type ATPases have 2 components, F(1) - the catalytic core - and F(o) - the membrane proton channel. F(1) has five subunits: alpha(3), beta(3), gamma(1), delta(1), epsilon(1), plus the additional subunit P18 (Tb427.05.1710) that is not present in F(1)F(o) ATP synthase from metazoa. Subunit P18 (Tb927.5.1710) interacts with the alpha subunit with a 1:1 stoichiometry; the interaction is direct. Subunit gamma is part of the central stalk. F(o) has three main subunits: a, b and c. The trypanosomal ATPase complex contains additional subunits that are not present in the F(1)F(o) ATP synthase from metazoa.

It localises to the mitochondrion. It is found in the mitochondrion inner membrane. Its function is as follows. Mitochondrial membrane ATP synthase (F(1)F(o) ATP synthase) produces ATP from ADP in the presence of a proton gradient across the membrane which is generated by electron transport complexes of the respiratory chain. F-type ATPases consist of two structural domains, F(1) - containing the extramembraneous catalytic core, and F(o) - containing the membrane proton channel, linked together by a central stalk and a peripheral stalk. During catalysis, ATP synthesis in the catalytic domain of F(1) is coupled via a rotary mechanism of the central stalk subunits to proton translocation. Subunits alpha and beta form the catalytic core in F(1). Rotation of the central stalk against the surrounding alpha(3)beta(3) subunits leads to hydrolysis of ATP in three separate catalytic sites on the beta subunits. Subunit alpha does not bear the catalytic high-affinity ATP-binding sites. Contrary to the procyclic, insect form that requires F(1)F(o) ATP synthase for ATP synthesis, the bloodstream form relies on ATP hydrolysis by F(1)F(o) ATP synthase to maintain its mitochondrial membrane potential. This is ATP synthase subunit alpha, mitochondrial from Trypanosoma brucei brucei.